The sequence spans 142 residues: Large ribosomal subunit protein uL13 (142 aa).

The protein belongs to the universal ribosomal protein uL13 family. Part of the 50S ribosomal subunit.

This protein is one of the early assembly proteins of the 50S ribosomal subunit, although it is not seen to bind rRNA by itself. It is important during the early stages of 50S assembly. This is Large ribosomal subunit protein uL13 from Histophilus somni (Haemophilus somnus).